The following is a 261-amino-acid chain: Small ribosomal subunit protein eS4 (261 aa).

The 63-residue stretch at 42–104 (LPLVIFLRNR…TGEFFRLIYD (63 aa)) folds into the S4 RNA-binding domain.

The protein belongs to the eukaryotic ribosomal protein eS4 family.

The sequence is that of Small ribosomal subunit protein eS4 (RpS4) from Carabus granulatus (Ground beetle).